Consider the following 207-residue polypeptide: Guanylate kinase (207 aa).

The Guanylate kinase-like domain occupies 6-185 (GLLIVLSGPS…AKNRIQCIVE (180 aa)). 13–20 (GPSGVGKG) provides a ligand contact to ATP.

It belongs to the guanylate kinase family.

It is found in the cytoplasm. It carries out the reaction GMP + ATP = GDP + ADP. Functionally, essential for recycling GMP and indirectly, cGMP. This Staphylococcus aureus (strain Mu50 / ATCC 700699) protein is Guanylate kinase.